We begin with the raw amino-acid sequence, 517 residues long: Glycerol kinase 5 (517 aa).

Residues Ser23 and Thr24 each contribute to the ATP site. Glycerol-binding residues include Arg93, Asp270, and Gln271. The ATP site is built by Thr292, Gly335, and Gly432.

It belongs to the FGGY kinase family.

It localises to the cytoplasm. The enzyme catalyses glycerol + ATP = sn-glycerol 3-phosphate + ADP + H(+). It functions in the pathway polyol metabolism; glycerol degradation via glycerol kinase pathway; sn-glycerol 3-phosphate from glycerol: step 1/1. Skin-specific kinase that plays a key role in glycerol metabolism, catalyzing its phosphorylation to produce sn-glycerol 3-phosphate. Involved in skin-specific regulation of sterol regulatory element-binding protein (SREBP) processing and lipid biosynthesis. This is Glycerol kinase 5 (GK5) from Gallus gallus (Chicken).